Reading from the N-terminus, the 124-residue chain is Ribonuclease pancreatic (124 aa).

The span at 1-13 (KETSAQKFERQHM) shows a compositional bias: basic and acidic residues. Residues 1-25 (KETSAQKFERQHMDSTGSSSSSPTY) are disordered. Substrate is bound by residues K7 and R10. H12 functions as the Proton acceptor in the catalytic mechanism. Disulfide bonds link C26-C84, C40-C95, C58-C110, and C65-C72. Substrate is bound by residues 41–45 (KPVNT), K66, and R85. The active-site Proton donor is the H119.

Belongs to the pancreatic ribonuclease family. In terms of assembly, monomer. Interacts with and forms tight 1:1 complexes with RNH1. Dimerization of two such complexes may occur. Interaction with RNH1 inhibits this protein. As to expression, pancreas.

The protein resides in the secreted. It catalyses the reaction an [RNA] containing cytidine + H2O = an [RNA]-3'-cytidine-3'-phosphate + a 5'-hydroxy-ribonucleotide-3'-[RNA].. The enzyme catalyses an [RNA] containing uridine + H2O = an [RNA]-3'-uridine-3'-phosphate + a 5'-hydroxy-ribonucleotide-3'-[RNA].. Endonuclease that catalyzes the cleavage of RNA on the 3' side of pyrimidine nucleotides. Acts on single-stranded and double-stranded RNA. The protein is Ribonuclease pancreatic (RNASE1) of Ondatra zibethicus (Muskrat).